Reading from the N-terminus, the 301-residue chain is GTPase Era (301 aa).

Residues 6–173 (KSGFVAIVGR…LEQTNANLEI (168 aa)) form the Era-type G domain. Residues 14-21 (GRPNVGKS) are G1. GTP is bound at residue 14-21 (GRPNVGKS). The interval 40 to 44 (QTTRN) is G2. The segment at 61–64 (DTPG) is G3. GTP contacts are provided by residues 61-65 (DTPGI) and 123-126 (NKID). Residues 123–126 (NKID) are G4. Residues 152–154 (ISA) are G5. Residues 204-282 (TREEVPHSVA…FLEVWVKVQK (79 aa)) form the KH type-2 domain.

It belongs to the TRAFAC class TrmE-Era-EngA-EngB-Septin-like GTPase superfamily. Era GTPase family. Monomer.

The protein localises to the cytoplasm. It localises to the cell membrane. Functionally, an essential GTPase that binds both GDP and GTP, with rapid nucleotide exchange. Plays a role in 16S rRNA processing and 30S ribosomal subunit biogenesis and possibly also in cell cycle regulation and energy metabolism. In Listeria monocytogenes serotype 4a (strain HCC23), this protein is GTPase Era.